Reading from the N-terminus, the 203-residue chain is MSSESDSPTPQTPPAQPAASQPKADSPLMEGIKTIGLSVVLALGIRTFVAEARYIPSESMLPTLEVNDRLIVEKISYHFNPPRRGDIIVFHPTEALKQQNPSLNEAFIKRVIGLPGETVQVTGGRVLINGQPLEENYIQSPPDYQWGPEKVPADSFLVLGDNRNNSYDSHFWGYVPRQNIIGRAVVRFWPVNRLGELGPPPSY.

The disordered stretch occupies residues M1–S26. The Cytoplasmic segment spans residues M1–K33. Positions P17–S26 are enriched in low complexity. The helical transmembrane segment at T34 to A50 threads the bilayer. Residues E51–Y203 lie on the Extracellular side of the membrane. Catalysis depends on residues S59 and K109.

It belongs to the peptidase S26 family.

It localises to the cell membrane. The enzyme catalyses Cleavage of hydrophobic, N-terminal signal or leader sequences from secreted and periplasmic proteins.. In Leptolyngbya laminosa (Phormidium laminosum), this protein is Signal peptidase I (lepB).